A 498-amino-acid chain; its full sequence is uncharacterized protein (498 aa).

The first 26 residues, 1 to 26, serve as a signal peptide directing secretion; sequence MEESSMAQASLICLLLSFSIIMLSNA. The Extracellular segment spans residues 27–441; the sequence is ADISIDCGSS…GEEKSSSNLA (415 aa). 4 N-linked (GlcNAc...) asparagine glycosylation sites follow: N44, N150, N354, and N357. The disordered stretch occupies residues 351 to 439; it reads GSGNGTNSTS…KSGEEKSSSN (89 aa). Over residues 362–414 the composition is skewed to gly residues; that stretch reads SGGGSPSPGGGSGSPPSTGGGSGSPPSTGGGGGSPSKGGGGGKSGGSNNGDGG. The span at 418–436 shows a compositional bias: basic and acidic residues; sequence ASEDEKSADSSGKSGEEKS. The chain crosses the membrane as a helical span at residues 442–462; it reads LPLGISLPTLLSLGAGGWGVW. Residues 463-498 lie on the Cytoplasmic side of the membrane; that stretch reads KYFIKPRRHPESELPLKQNISLQVNMGNATVVNAGQ.

The protein resides in the membrane. This is an uncharacterized protein from Arabidopsis thaliana (Mouse-ear cress).